Reading from the N-terminus, the 180-residue chain is Large ribosomal subunit protein uL6c (180 aa).

It belongs to the universal ribosomal protein uL6 family. In terms of assembly, part of the 50S ribosomal subunit.

Its subcellular location is the plastid. The protein localises to the chloroplast. Its function is as follows. Binds 23S rRNA. This Porphyra purpurea (Red seaweed) protein is Large ribosomal subunit protein uL6c (rpl6).